A 346-amino-acid polypeptide reads, in one-letter code: Ribonucleoside-diphosphate reductase subunit beta (346 aa).

Positions 89, 120, and 123 each coordinate Fe cation. Residue Y129 is part of the active site. Fe cation is bound by residues E193, E227, and H230.

It belongs to the ribonucleoside diphosphate reductase small chain family. As to quaternary structure, tetramer of two alpha and two beta subunits. The cofactor is Fe cation.

The catalysed reaction is a 2'-deoxyribonucleoside 5'-diphosphate + [thioredoxin]-disulfide + H2O = a ribonucleoside 5'-diphosphate + [thioredoxin]-dithiol. In terms of biological role, provides the precursors necessary for DNA synthesis. Catalyzes the biosynthesis of deoxyribonucleotides from the corresponding ribonucleotides. The polypeptide is Ribonucleoside-diphosphate reductase subunit beta (nrdB) (Chlamydia pneumoniae (Chlamydophila pneumoniae)).